Consider the following 344-residue polypeptide: Phosphate acyltransferase (344 aa).

It belongs to the PlsX family. In terms of assembly, homodimer. Probably interacts with PlsY.

It is found in the cytoplasm. It catalyses the reaction a fatty acyl-[ACP] + phosphate = an acyl phosphate + holo-[ACP]. Its pathway is lipid metabolism; phospholipid metabolism. In terms of biological role, catalyzes the reversible formation of acyl-phosphate (acyl-PO(4)) from acyl-[acyl-carrier-protein] (acyl-ACP). This enzyme utilizes acyl-ACP as fatty acyl donor, but not acyl-CoA. This is Phosphate acyltransferase from Blochmanniella floridana.